A 124-amino-acid polypeptide reads, in one-letter code: Fluoride-specific ion channel FluC (124 aa).

4 helical membrane-spanning segments follow: residues Ile-3–Trp-23, Tyr-34–Ala-54, Leu-66–Thr-86, and Leu-100–Ala-120. Positions 74 and 77 each coordinate Na(+).

Belongs to the fluoride channel Fluc/FEX (TC 1.A.43) family.

The protein localises to the cell membrane. It carries out the reaction fluoride(in) = fluoride(out). With respect to regulation, na(+) is not transported, but it plays an essential structural role and its presence is essential for fluoride channel function. Functionally, fluoride-specific ion channel. Important for reducing fluoride concentration in the cell, thus reducing its toxicity. This chain is Fluoride-specific ion channel FluC, found in Roseiflexus sp. (strain RS-1).